The sequence spans 322 residues: Transcription cofactor vestigial-like protein 2 (322 aa).

A compositionally biased stretch (low complexity) spans Ala-42–Ser-61. Disordered regions lie at residues Ala-42 to Pro-75 and Pro-248 to Gly-322. Basic and acidic residues predominate over residues Val-62–Pro-75. 2 stretches are compositionally biased toward low complexity: residues Pro-248–Ala-258 and Gly-270–Pro-283. A compositionally biased stretch (pro residues) spans Ser-312–Gly-322.

It belongs to the vestigial family. As to quaternary structure, interacts with TEFs. Binds to TEAD1/TEF1. In terms of tissue distribution, skeletal muscle specific.

Its subcellular location is the nucleus. May act as a specific coactivator for the mammalian TEFs. May play a role in the development of skeletal muscles. This chain is Transcription cofactor vestigial-like protein 2 (Vgll2), found in Mus musculus (Mouse).